The chain runs to 307 residues: Malate dehydrogenase (307 aa).

NAD(+) contacts are provided by residues 8 to 13 (GAGNVG) and aspartate 32. 2 residues coordinate substrate: arginine 81 and arginine 87. NAD(+) contacts are provided by residues asparagine 94 and 117-119 (VSN). The substrate site is built by asparagine 119 and arginine 150. Histidine 174 (proton acceptor) is an active-site residue.

It belongs to the LDH/MDH superfamily. MDH type 3 family.

It carries out the reaction (S)-malate + NAD(+) = oxaloacetate + NADH + H(+). Its function is as follows. Catalyzes the reversible oxidation of malate to oxaloacetate. This chain is Malate dehydrogenase, found in Dehalococcoides mccartyi (strain ATCC BAA-2100 / JCM 16839 / KCTC 5957 / BAV1).